The following is a 1073-amino-acid chain: Pleckstrin homology domain-containing family G member 5 (1073 aa).

Disordered stretches follow at residues 1–28 (MGTG…SQLL), 91–135 (VSTR…ARRR), 217–261 (PGDE…ESSL), 278–309 (GEAG…GINE), and 367–388 (SWEE…RLED). 2 stretches are compositionally biased toward basic and acidic residues: residues 217-231 (PGDE…KDSK) and 249-260 (ERVDPQSRRESS). Over residues 367-381 (SWEEEEEDDEEDEES) the composition is skewed to acidic residues. In terms of domain architecture, DH spans 406 to 598 (HQQEAVWELL…ERFIHHVNTC (193 aa)). In terms of domain architecture, PH spans 654 to 754 (QLLLEGSLRM…WVDTIYNAQN (101 aa)). Disordered regions lie at residues 762 to 818 (QLSA…TSDG), 833 to 873 (TLSS…GPVD), and 899 to 925 (PVVE…TPVQ). A compositionally biased stretch (acidic residues) spans 777 to 790 (LEEEEDEQEEEGEE). Polar residues-rich tracts occupy residues 791-809 (SGTS…SNSL) and 844-864 (VSSQ…TPTS). T793 is modified (phosphothreonine). S798 carries the post-translational modification Phosphoserine. The segment covering 900-915 (VVEPAPVPQTPSPQPS) has biased composition (pro residues). Phosphothreonine is present on T909. S911, S936, and S941 each carry phosphoserine. Positions 993 to 1046 (MCDPCHGPQLSESENRPSHMTGGPADSARRRCREMPSGTMSRVQSEPPSGVSAQ) are disordered. Residues 1030–1039 (GTMSRVQSEP) are compositionally biased toward polar residues.

Interacts with GIPC1/synectin and RHOA. Expressed in neurons and glial cells of the peripheral nervous system, with highest levels of expression in the brain and sciatic nerve endoneurium. Isoform 2 is expressed at detectable levels only in malignant cells.

Its subcellular location is the cytoplasm. It localises to the perinuclear region. The protein resides in the cell membrane. The protein localises to the cell junction. It is found in the cell projection. Its subcellular location is the lamellipodium. Its function is as follows. Functions as a guanine exchange factor (GEF) for RAB26 and thus regulates autophagy of synaptic vesicles in axon terminal of motoneurons. Involved in the control of neuronal cell differentiation. Plays a role in angiogenesis through regulation of endothelial cells chemotaxis. Also affects the migration, adhesion, and matrix/bone degradation in macrophages and osteoclasts. The chain is Pleckstrin homology domain-containing family G member 5 (Plekhg5) from Mus musculus (Mouse).